Here is a 147-residue protein sequence, read N- to C-terminus: 3-dehydroquinate dehydratase (147 aa).

The Proton acceptor role is filled by Tyr-23. Asn-75, His-81, and Asp-88 together coordinate substrate. The active-site Proton donor is the His-101. Residues 102 to 103 and Arg-112 each bind substrate; that span reads LS.

This sequence belongs to the type-II 3-dehydroquinase family. As to quaternary structure, homododecamer.

The enzyme catalyses 3-dehydroquinate = 3-dehydroshikimate + H2O. It functions in the pathway metabolic intermediate biosynthesis; chorismate biosynthesis; chorismate from D-erythrose 4-phosphate and phosphoenolpyruvate: step 3/7. In terms of biological role, catalyzes a trans-dehydration via an enolate intermediate. The chain is 3-dehydroquinate dehydratase from Stenotrophomonas maltophilia (strain K279a).